The chain runs to 61 residues: uncharacterized protein (61 aa).

This is an uncharacterized protein from Dictyostelium discoideum (Social amoeba).